The sequence spans 643 residues: Transmembrane protein 62 (643 aa).

A helical transmembrane segment spans residues 9 to 29; sequence VVAGLAAAAVAALLLEHYGLA. N-linked (GlcNAc...) asparagine glycosylation occurs at asparagine 180. Transmembrane regions (helical) follow at residues 431–451, 484–504, 532–552, and 572–592; these read IVAR…LITF, YSVL…GEII, GIIQ…WSLL, and IIPV…SCYF.

The protein localises to the membrane. This chain is Transmembrane protein 62 (Tmem62), found in Mus musculus (Mouse).